The following is a 109-amino-acid chain: Spermidine export protein MdtI (109 aa).

A run of 4 helical transmembrane segments spans residues 6–26 (WIHG…NVLL), 36–56 (CYGI…SQAV), 64–84 (AYAL…WVLF), and 88–108 (LNPK…MIKF).

The protein belongs to the drug/metabolite transporter (DMT) superfamily. Small multidrug resistance (SMR) (TC 2.A.7.1) family. MdtI subfamily. As to quaternary structure, forms a complex with MdtJ.

It localises to the cell inner membrane. Catalyzes the excretion of spermidine. The polypeptide is Spermidine export protein MdtI (Salmonella paratyphi A (strain ATCC 9150 / SARB42)).